Reading from the N-terminus, the 214-residue chain is Outer-membrane lipoprotein LolB (214 aa).

A signal peptide spans 1–25 (MNNLKRFTESIFSCIALSTLLFLGG). The N-palmitoyl cysteine moiety is linked to residue C26. Residue C26 is the site of S-diacylglycerol cysteine attachment.

Belongs to the LolB family. Monomer.

Its subcellular location is the cell outer membrane. Functionally, plays a critical role in the incorporation of lipoproteins in the outer membrane after they are released by the LolA protein. The chain is Outer-membrane lipoprotein LolB from Shewanella putrefaciens (strain CN-32 / ATCC BAA-453).